The following is a 218-amino-acid chain: Ribose-5-phosphate isomerase A (218 aa).

Residues 28-31 (TGST), 81-84 (DGAD), and 94-97 (KGGG) each bind substrate. The active-site Proton acceptor is the Glu-103. Lys-121 is a binding site for substrate.

This sequence belongs to the ribose 5-phosphate isomerase family. In terms of assembly, homodimer.

It carries out the reaction aldehydo-D-ribose 5-phosphate = D-ribulose 5-phosphate. Its pathway is carbohydrate degradation; pentose phosphate pathway; D-ribose 5-phosphate from D-ribulose 5-phosphate (non-oxidative stage): step 1/1. In terms of biological role, catalyzes the reversible conversion of ribose-5-phosphate to ribulose 5-phosphate. The polypeptide is Ribose-5-phosphate isomerase A (Aliivibrio salmonicida (strain LFI1238) (Vibrio salmonicida (strain LFI1238))).